Reading from the N-terminus, the 214-residue chain is Large ribosomal subunit protein bL25 (214 aa).

A disordered region spans residues 194 to 214 (TTEAEETAEPEVIRRKEEEEE). Residues 204–214 (EVIRRKEEEEE) are compositionally biased toward basic and acidic residues.

Belongs to the bacterial ribosomal protein bL25 family. CTC subfamily. As to quaternary structure, part of the 50S ribosomal subunit; part of the 5S rRNA/L5/L18/L25 subcomplex. Contacts the 5S rRNA. Binds to the 5S rRNA independently of L5 and L18.

In terms of biological role, this is one of the proteins that binds to the 5S RNA in the ribosome where it forms part of the central protuberance. In Thermotoga petrophila (strain ATCC BAA-488 / DSM 13995 / JCM 10881 / RKU-1), this protein is Large ribosomal subunit protein bL25.